The primary structure comprises 232 residues: Sugar fermentation stimulation protein homolog (232 aa).

The protein belongs to the SfsA family.

The sequence is that of Sugar fermentation stimulation protein homolog from Magnetococcus marinus (strain ATCC BAA-1437 / JCM 17883 / MC-1).